Reading from the N-terminus, the 273-residue chain is Urease accessory protein UreD (273 aa).

It belongs to the UreD family. As to quaternary structure, ureD, UreF and UreG form a complex that acts as a GTP-hydrolysis-dependent molecular chaperone, activating the urease apoprotein by helping to assemble the nickel containing metallocenter of UreC. The UreE protein probably delivers the nickel.

It is found in the cytoplasm. Its function is as follows. Required for maturation of urease via the functional incorporation of the urease nickel metallocenter. This is Urease accessory protein UreD from Rhizobium leguminosarum bv. trifolii (strain WSM2304).